Reading from the N-terminus, the 340-residue chain is Conidiation-specific protein 13 (340 aa).

A disordered region spans residues 313–340 (AEAAAGISSGKPAADRKTKGKKGTKFRV). Positions 330–340 (TKGKKGTKFRV) are enriched in basic residues.

This Neurospora crassa (strain ATCC 24698 / 74-OR23-1A / CBS 708.71 / DSM 1257 / FGSC 987) protein is Conidiation-specific protein 13 (con-13).